The sequence spans 149 residues: Transcriptional repressor NrdR (149 aa).

The segment at 3 to 34 is a zinc-finger region; that stretch reads CPFCSENDTKVIDSRLVADGHQVRRRRQCLAC. Residues 49-139 enclose the ATP-cone domain; sequence PKVIKSNGNR…VYRSFEDIRE (91 aa).

Belongs to the NrdR family. Zn(2+) serves as cofactor.

Its function is as follows. Negatively regulates transcription of bacterial ribonucleotide reductase nrd genes and operons by binding to NrdR-boxes. This Vibrio vulnificus (strain YJ016) protein is Transcriptional repressor NrdR.